Here is a 195-residue protein sequence, read N- to C-terminus: Transmembrane protein 239 (195 aa).

2 helical membrane passes run leucine 105 to phenylalanine 125 and histidine 145 to phenylalanine 171.

It localises to the membrane. This Homo sapiens (Human) protein is Transmembrane protein 239 (TMEM239).